Here is a 309-residue protein sequence, read N- to C-terminus: Epidermal retinol dehydrogenase 2 (309 aa).

The chain crosses the membrane as a helical span at residues 11 to 31; sequence LLVFLGKSLLSVLEALLFHVI. NADP(+) is bound at residue 44 to 68; it reads LITGAGSGLGRLLALQFARLGAVLV. Serine 177 contacts substrate. Tyrosine 190 serves as the catalytic Proton acceptor. A helical membrane pass occupies residues 270 to 290; that stretch reads FLYFIVFLKSILPIKTGILIA.

Belongs to the short-chain dehydrogenases/reductases (SDR) family.

It is found in the endoplasmic reticulum membrane. The catalysed reaction is all-trans-retinol--[retinol-binding protein] + NAD(+) = all-trans-retinal--[retinol-binding protein] + NADH + H(+). The protein operates within cofactor metabolism; retinol metabolism. Functionally, oxidoreductase with strong preference for NAD. Active in both the oxidative and reductive directions. Oxidizes all-trans-retinol in all-trans-retinaldehyde. No activity was detected with 11-cis-retinol or 11-cis-retinaldehyde as substrates with either NAD(+)/NADH or NADP(+)/NADPH. This Mus musculus (Mouse) protein is Epidermal retinol dehydrogenase 2.